The primary structure comprises 375 residues: Mitogen-activated protein kinase 1 (375 aa).

A Protein kinase domain is found at 43–329 (RPPIMPIGRG…VEEALAHPYL (287 aa)). ATP is bound by residues 49 to 57 (IGRGAYGIV) and K72. The active-site Proton acceptor is D169. T201 bears the Phosphothreonine mark. The TXY signature appears at 201–203 (TEY). Residue Y203 is modified to Phosphotyrosine. Position 206 is a phosphothreonine (T206).

This sequence belongs to the protein kinase superfamily. CMGC Ser/Thr protein kinase family. MAP kinase subfamily. It depends on Mg(2+) as a cofactor. Post-translationally, activated by wounding and UV-C in a cultivar-dependent manner; phosphorylated in cv. Pungchon but not in cv. Subicho.

The enzyme catalyses L-seryl-[protein] + ATP = O-phospho-L-seryl-[protein] + ADP + H(+). The catalysed reaction is L-threonyl-[protein] + ATP = O-phospho-L-threonyl-[protein] + ADP + H(+). Activated by threonine and tyrosine phosphorylation. Functionally, stress-inducible protein kinase involved in oxidative stress-mediated and innate immune MAP kinase signaling cascades. This is Mitogen-activated protein kinase 1 from Capsicum annuum (Capsicum pepper).